We begin with the raw amino-acid sequence, 777 residues long: MDSKESLTPGKEENPSSVLTQERGNVMDFCKILRGGATLKVSVSSTSLAAASQSDSKQQRLLVDFPKGSVSNAQQPDLSKAVSLSMGLYMGETETKVMGNDLGFPQQGQISLSSGETDLQLLEESIANLNRSTSVPENPKSSASSSVSAAPKEKEFPKTHSDVSSEQQNLKGQTGTNGGNAKLCTADQSTFDILQDLEFSSGSPGKETNQSPWRSDLLIDENCLLSPLAGEEDSFLLEGNSNEDCKPLILPDTKPKIKDNGDLVLSSSSNVTLPQVKTEKEDFIELCTPGVIKQEKLSTVYCQASFPGANIIGNKMSAISIHGVSTSGGQMYHYDMNTASLSQQQDQKPIFNVIPPIPVGSENWNRCQGSGDDNLTSLGTLNFPGRTVFSNGYSSPSMRPDVSSPPSSSSTATTGPPPKLCLVCSDEASGCHYGVLTCGSCKVFFKRAVEGQHNYLCAGRNDCIIDKIRRKNCPACRYRKCLQAGMNLEARKTKKKIKGIQQATTGVSQETSENPANKTIVPATLPQLTPTLVSLLEVIEPEVLYAGYDSTVPDSTWRIMTTLNMLGGRQVIAAVKWAKAIPGFRNLHLDDQMTLLQYSWMFLMAFALGWRSYRQASSNLLCFAPDLIINEQRMTLPCMYDQCKHMLYVSSELHRLQVSYEEYLCMKTLLLLSSVPKDGLKSQELFDEIRMTYIKELGKAIVKREGNSSQNWQRFYQLTKLLDSMHEVVENLLNYCFQTFLDKTMSIEFPEMLAEIITNQLPKYSNGNIRKLLFHQK.

Residues 1-14 (MDSKESLTPGKEEN) are compositionally biased toward basic and acidic residues. The segment at 1-22 (MDSKESLTPGKEENPSSVLTQE) is disordered. Residues 1-420 (MDSKESLTPG…TATTGPPPKL (420 aa)) form a modulating region. Position 8 is a phosphothreonine (Thr8). Arg23 is modified (omega-N-methylarginine). Residues Ser45, Ser113, Ser134, and Ser141 each carry the phosphoserine modification. Residues 130-183 (NRSTSVPENPKSSASSSVSAAPKEKEFPKTHSDVSSEQQNLKGQTGTNGGNAKL) are disordered. Positions 134-150 (SVPENPKSSASSSVSAA) are enriched in low complexity. Residues 151–163 (PKEKEFPKTHSDV) show a composition bias toward basic and acidic residues. Residues 164 to 174 (SSEQQNLKGQT) show a composition bias toward polar residues. Residues Ser203, Ser211, and Ser226 each carry the phosphoserine modification. Lys258 participates in a covalent cross-link: Glycyl lysine isopeptide (Lys-Gly) (interchain with G-Cter in SUMO2). Ser267 carries the phosphoserine modification. Residues Lys277 and Lys293 each participate in a glycyl lysine isopeptide (Lys-Gly) (interchain with G-Cter in SUMO); alternate cross-link. Residues Lys277 and Lys293 each participate in a glycyl lysine isopeptide (Lys-Gly) (interchain with G-Cter in SUMO2); alternate cross-link. Over residues 394-414 (SSPSMRPDVSSPPSSSSTATT) the composition is skewed to low complexity. A disordered region spans residues 394 to 415 (SSPSMRPDVSSPPSSSSTATTG). Ser404 is modified (phosphoserine). Residue Lys419 forms a Glycyl lysine isopeptide (Lys-Gly) (interchain with G-Cter in ubiquitin) linkage. 2 consecutive NR C4-type zinc fingers follow at residues 421-441 (CLVC…CGSC) and 457-481 (CAGR…YRKC). The nuclear receptor DNA-binding region spans 421–486 (CLVCSDEASG…RYRKCLQAGM (66 aa)). 4 positions are modified to N6-acetyllysine: Lys480, Lys492, Lys494, and Lys495. The interval 485 to 777 (GMNLEARKTK…NIRKLLFHQK (293 aa)) is interaction with CLOCK. The tract at residues 487-523 (NLEARKTKKKIKGIQQATTGVSQETSENPANKTIVPA) is hinge. The region spanning 524-758 (TLPQLTPTLV…FPEMLAEIIT (235 aa)) is the NR LBD domain. Residues 532-697 (LVSLLEVIEP…EIRMTYIKEL (166 aa)) form an interaction with CRY1 region. A Glycyl lysine isopeptide (Lys-Gly) (interchain with G-Cter in SUMO) cross-link involves residue Lys703.

The protein belongs to the nuclear hormone receptor family. NR3 subfamily. In terms of assembly, heteromultimeric cytoplasmic complex with HSP90AA1, HSPA1A/HSPA1B, and FKBP5 or another immunophilin such as PPID, STIP1, or the immunophilin homolog PPP5C. Upon ligand binding FKBP5 dissociates from the complex and FKBP4 takes its place, thereby linking the complex to dynein and mediating transport to the nucleus, where the complex dissociates. Probably forms a complex composed of chaperones HSP90 and HSP70, co-chaperones CDC37, PPP5C, TSC1 and client protein TSC2, CDK4, AKT, RAF1 and NR3C1; this complex does not contain co-chaperones STIP1/HOP and PTGES3/p23. Directly interacts with UNC45A. Binds to DNA as a homodimer, and as heterodimer with NR3C2 or the retinoid X receptor. Binds STAT5A and STAT5B homodimers and heterodimers. Interacts with NRIP1, POU2F1, POU2F2 and TRIM28. Interacts with several coactivator complexes, including the SMARCA4 complex, CREBBP/EP300, TADA2L (Ada complex) and p160 coactivators such as NCOA2 and NCOA6. Interaction with BAG1 inhibits transactivation. Interacts with HEXIM1 and TGFB1I1. Interacts with NCOA1. Interacts with NCOA3, SMARCA4, SMARCC1, SMARCD1, and SMARCE1. Interacts with CLOCK, CRY1 and CRY2 in a ligand-dependent fashion. Interacts with CIART. Interacts with RWDD3. Interacts with UBE2I/UBC9 and this interaction is enhanced in the presence of RWDD3. Interacts with GRIP1. Interacts with NR4A3 (via nuclear receptor DNA-binding domain), represses transcription activity of NR4A3 on the POMC promoter Nur response element (NurRE). Directly interacts with PNRC2 to attract and form a complex with UPF1 and DCP1A; the interaction leads to rapid mRNA degradation. Interacts with GSK3B. Interacts with FNIP1 and FNIP2. Interacts (via C-terminus) with HNRNPU (via C-terminus). Interacts with MCM3AP. Interacts (via domain NR LBD) with HSP90AA1 and HSP90AB1. In the absence of hormonal ligand, interacts with TACC1. Interacts (via NR LBD domain) with ZNF764 (via KRAB domain); the interaction regulates transcription factor activity of NR3C1 by directing its actions toward certain biologic pathways. Acetylation by CLOCK reduces its binding to glucocorticoid response elements and its transcriptional activity. In terms of processing, increased proteasome-mediated degradation in response to glucocorticoids. Post-translationally, phosphorylated in the absence of hormone; becomes hyperphosphorylated in the presence of glucocorticoid. The Ser-203, Ser-226 and Ser-404-phosphorylated forms are mainly cytoplasmic, and the Ser-211-phosphorylated form is nuclear. Phosphorylation at Ser-211 increases transcriptional activity. Phosphorylation at Ser-203, Ser-226 and Ser-404 decreases signaling capacity. Phosphorylation at Ser-404 may protect from glucocorticoid-induced apoptosis. Phosphorylation at Ser-203 and Ser-211 is not required in regulation of chromosome segregation. May be dephosphorylated by PPP5C, attenuates NR3C1 action. Ubiquitinated by UBR5, leading to its degradation: UBR5 specifically recognizes and binds ligand-bound NR3C1 when it is not associated with coactivators (NCOAs). In presence of NCOAs, the UBR5-degron is not accessible, preventing its ubiquitination and degradation. In terms of processing, sumoylation at Lys-277 and Lys-293 negatively regulates its transcriptional activity. Sumoylation at Lys-703 positively regulates its transcriptional activity in the presence of RWDD3. Sumoylation at Lys-277 and Lys-293 is dispensable whereas sumoylation at Lys-703 is critical for the stimulatory effect of RWDD3 on its transcriptional activity. Heat shock increases sumoylation in a RWDD3-dependent manner.

It localises to the cytoplasm. Its subcellular location is the nucleus. The protein localises to the mitochondrion. The protein resides in the cytoskeleton. It is found in the spindle. It localises to the microtubule organizing center. Its subcellular location is the centrosome. The protein localises to the chromosome. The protein resides in the nucleoplasm. In terms of biological role, receptor for glucocorticoids (GC). Has a dual mode of action: as a transcription factor that binds to glucocorticoid response elements (GRE), both for nuclear and mitochondrial DNA, and as a modulator of other transcription factors. Affects inflammatory responses, cellular proliferation and differentiation in target tissues. Involved in chromatin remodeling. Plays a role in rapid mRNA degradation by binding to the 5' UTR of target mRNAs and interacting with PNRC2 in a ligand-dependent manner which recruits the RNA helicase UPF1 and the mRNA-decapping enzyme DCP1A, leading to RNA decay. Could act as a coactivator for STAT5-dependent transcription upon growth hormone (GH) stimulation and could reveal an essential role of hepatic GR in the control of body growth. Mediates glucocorticoid-induced apoptosis. Promotes accurate chromosome segregation during mitosis. May act as a tumor suppressor. May play a negative role in adipogenesis through the regulation of lipolytic and antilipogenic gene expression. This is Glucocorticoid receptor (NR3C1) from Saguinus oedipus (Cotton-top tamarin).